We begin with the raw amino-acid sequence, 234 residues long: Large ribosomal subunit protein uL1 (234 aa).

This sequence belongs to the universal ribosomal protein uL1 family. As to quaternary structure, part of the 50S ribosomal subunit.

Functionally, binds directly to 23S rRNA. The L1 stalk is quite mobile in the ribosome, and is involved in E site tRNA release. Protein L1 is also a translational repressor protein, it controls the translation of the L11 operon by binding to its mRNA. This is Large ribosomal subunit protein uL1 from Bartonella tribocorum (strain CIP 105476 / IBS 506).